Consider the following 262-residue polypeptide: Nurim (262 aa).

At 1–4 (MAPA) the chain is on the nuclear side. Residues 5–28 (LLLVPAALASFILAFGTGVEFVRF) form a helical membrane-spanning segment. The Perinuclear space segment spans residues 29–58 (TSLRPLLGGIPESGGPDARHGWLAALQDRS). Residues 59-80 (ILASLAWDLCLLLLFVVQHSLM) traverse the membrane as a helical segment. The Nuclear portion of the chain corresponds to 81–97 (ATEAVKAWTSRYFGVLQ). A helical transmembrane segment spans residues 98–114 (RSLYVACTALALQLVMR). Residues 115–133 (YWETTPRGPVLWEARAEPW) are Perinuclear space-facing. Residues 134–164 (ATWVPLLCFVLHVVSWLLIFSILLVFDYAEL) form a helical membrane-spanning segment. Topologically, residues 165–191 (MGLKQVYYHVLGLGEPLSLKSPRALRL) are nuclear. A helical transmembrane segment spans residues 192-210 (FSHLRHPVCVELLTVLWVV). The Perinuclear space segment spans residues 211–216 (PTLGTD). The helical transmembrane segment at 217 to 234 (RLLLALLFTLYLGLAHGL) threads the bilayer. Residues 235–262 (DQQDLRYLRSQLQRKLHLLSRPQDGEAE) are Nuclear-facing.

Belongs to the nurim family.

It localises to the nucleus inner membrane. The protein is Nurim (Nrm) of Mus musculus (Mouse).